A 381-amino-acid chain; its full sequence is Prostatic acid phosphatase (381 aa).

The signal sequence occupies residues 1 to 31 (MRAVPLPLSRTASLSLGFLLLLSLCLDPGQA). R42 serves as a coordination point for substrate. The active-site Nucleophile is H43. R46 is a substrate binding site. N93 carries an N-linked (GlcNAc...) asparagine glycan. R110 contacts substrate. Cystine bridges form between C160-C371, C214-C312, and C346-C350. N-linked (GlcNAc...) asparagine glycosylation is present at N219. H288 contacts substrate. D289 acts as the Proton donor in catalysis. An N-linked (GlcNAc...) asparagine glycan is attached at N332.

The protein belongs to the histidine acid phosphatase family. Homodimer; dimer formation is required for phosphatase activity. In terms of tissue distribution, expressed in salivary gland, thymus and thyroid gland. As to expression, widely expressed in prostate lobes, brain, kidney, liver, lung, muscle, placenta, salivary gland, spleen, thyroid and thymus. Locates to Schwann cells and fibroblasts. Expressed in peptidergic and non-peptidergic nociceptive (pain-sensing) neurons. Preferentially expressed in non-peptidergic doral root ganglia neurons.

It is found in the secreted. It localises to the cell membrane. The protein localises to the lysosome membrane. It carries out the reaction a phosphate monoester + H2O = an alcohol + phosphate. It catalyses the reaction a ribonucleoside 5'-phosphate + H2O = a ribonucleoside + phosphate. The enzyme catalyses 1-(9Z-octadecenoyl)-sn-glycero-3-phosphate + H2O = 1-(9Z-octadecenoyl)-sn-glycerol + phosphate. The catalysed reaction is O-phospho-L-tyrosyl-[protein] + H2O = L-tyrosyl-[protein] + phosphate. In terms of biological role, a non-specific tyrosine phosphatase that dephosphorylates a diverse number of substrates under acidic conditions (pH 4-6) including alkyl, aryl, and acyl orthophosphate monoesters and phosphorylated proteins. Has lipid phosphatase activity and inactivates lysophosphatidic acid in seminal plasma. Functionally, in addition to its tyrosine phosphatase activity, also has ecto-5'-nucleotidase activity in dorsal root ganglion (DRG) neurons. Generates adenosine from AMP. This extracellular adenosine leads to a decrease in chronic pain by activating A1R in nociceptive neurons. The chain is Prostatic acid phosphatase (Acp3) from Mus musculus (Mouse).